The chain runs to 402 residues: Type II NADH:quinone oxidoreductase (402 aa).

Residues 12-16 (GAGYA), 39-40 (NK), and Val-83 each bind FAD. Glu-172 is an active-site residue. FAD contacts are provided by residues Asp-302, 319 to 320 (AQ), and Lys-379.

It belongs to the NADH dehydrogenase family. Requires FAD as cofactor.

Its subcellular location is the cell membrane. It carries out the reaction a quinone + NADH + H(+) = a quinol + NAD(+). Alternative, nonproton pumping NADH:quinone oxidoreductase that delivers electrons to the respiratory chain by oxidation of NADH and reduction of quinones, and contributes to the regeneration of NAD(+). The protein is Type II NADH:quinone oxidoreductase of Staphylococcus epidermidis (strain ATCC 35984 / DSM 28319 / BCRC 17069 / CCUG 31568 / BM 3577 / RP62A).